A 108-amino-acid chain; its full sequence is uncharacterized protein (108 aa).

The protein to M.jannaschii MJ1245 and M.thermoautotrophicum MTH1110.

This is an uncharacterized protein from Methanocaldococcus jannaschii (strain ATCC 43067 / DSM 2661 / JAL-1 / JCM 10045 / NBRC 100440) (Methanococcus jannaschii).